A 170-amino-acid polypeptide reads, in one-letter code: Zinc finger matrin-type protein 5 (170 aa).

The C3H1-type zinc finger occupies 51 to 79 (EQNKRPCRKFLLTGQCDFGSNCRFSHMSE). Residues 150-170 (PPSLRAPPPGGWPLQPRVQWG) are disordered.

In terms of assembly, component of the U11/U12 snRNPs that are part of the U12-type spliceosome. Not found in the major spliceosome.

The protein resides in the nucleus. This Homo sapiens (Human) protein is Zinc finger matrin-type protein 5 (ZMAT5).